Consider the following 407-residue polypeptide: Dephospho-CoA kinase (407 aa).

The 202-residue stretch at 3-204 folds into the DPCK domain; it reads RIGLTGGIGA…QPFAHNLAQR (202 aa). 11–16 is a binding site for ATP; sequence GAGKSL. The interval 196 to 407 is UPF0157; that stretch reads PFAHNLAQRQ…EWADAVHWRP (212 aa).

The protein in the N-terminal section; belongs to the CoaE family. It in the C-terminal section; belongs to the UPF0157 (GrpB) family.

Its subcellular location is the cytoplasm. The catalysed reaction is 3'-dephospho-CoA + ATP = ADP + CoA + H(+). It functions in the pathway cofactor biosynthesis; coenzyme A biosynthesis; CoA from (R)-pantothenate: step 5/5. In terms of biological role, catalyzes the phosphorylation of the 3'-hydroxyl group of dephosphocoenzyme A to form coenzyme A. This Mycobacterium bovis (strain ATCC BAA-935 / AF2122/97) protein is Dephospho-CoA kinase.